A 203-amino-acid chain; its full sequence is Protein shisa-like-1a (203 aa).

The N-terminal stretch at 1–25 (MIMNGRWSFNTLAIIFILLSTAALS) is a signal peptide. Topologically, residues 26–97 (AHFRVCEPYS…SDSFAHNNYT (72 aa)) are extracellular. 5 N-linked (GlcNAc...) asparagine glycosylation sites follow: N53, N63, N72, N83, and N95. A helical transmembrane segment spans residues 98–118 (ALIGVWIYGFFVMVLLALDFL). Residues 119 to 203 (YYSAMNYELC…LLSFQTSTAW (85 aa)) lie on the Cytoplasmic side of the membrane. The tract at residues 157-191 (ELNTGPGLSQQQQLHLHHHHHHHHPRHSLRGDTQS) is disordered. Over residues 161–170 (GPGLSQQQQL) the composition is skewed to low complexity. A compositionally biased stretch (basic residues) spans 171 to 184 (HLHHHHHHHHPRHS).

This sequence belongs to the shisa family.

Its subcellular location is the membrane. In Danio rerio (Zebrafish), this protein is Protein shisa-like-1a (shisal1a).